A 99-amino-acid chain; its full sequence is DNA-directed RNA polymerase subunit omega (99 aa).

This sequence belongs to the RNA polymerase subunit omega family. In terms of assembly, the RNAP catalytic core consists of 2 alpha, 1 beta, 1 beta' and 1 omega subunit. When a sigma factor is associated with the core the holoenzyme is formed, which can initiate transcription.

The enzyme catalyses RNA(n) + a ribonucleoside 5'-triphosphate = RNA(n+1) + diphosphate. Functionally, promotes RNA polymerase assembly. Latches the N- and C-terminal regions of the beta' subunit thereby facilitating its interaction with the beta and alpha subunits. This Deinococcus deserti (strain DSM 17065 / CIP 109153 / LMG 22923 / VCD115) protein is DNA-directed RNA polymerase subunit omega.